Here is a 397-residue protein sequence, read N- to C-terminus: Tryptophan synthase beta chain (397 aa).

An N6-(pyridoxal phosphate)lysine modification is found at K86.

This sequence belongs to the TrpB family. Tetramer of two alpha and two beta chains. It depends on pyridoxal 5'-phosphate as a cofactor.

It catalyses the reaction (1S,2R)-1-C-(indol-3-yl)glycerol 3-phosphate + L-serine = D-glyceraldehyde 3-phosphate + L-tryptophan + H2O. The protein operates within amino-acid biosynthesis; L-tryptophan biosynthesis; L-tryptophan from chorismate: step 5/5. Its function is as follows. The beta subunit is responsible for the synthesis of L-tryptophan from indole and L-serine. The polypeptide is Tryptophan synthase beta chain (Edwardsiella ictaluri (strain 93-146)).